Here is a 356-residue protein sequence, read N- to C-terminus: MAGLKLQAVTKSWGGKTQVIQPLTLDVADGEFIVMVGPSGCGKSTLLRMVAGLERVTSGDIWIDRKRVTEMEPKDRGIAMVFQNYALYPHMSVEENMAWGLKIRGMSKAHIEERVREAARILELDGLLKRRPRELSGGQRQRVAMGRAIVREPAVFLFDEPLSNLDAKLRVQMRLELQHLHRRLRTTSLYVTHDQVEAMTLAQRVMVMNKGVAEQIGTPVEVYEKPASRFVASFIGSPAMNLLDGVISASGDRFELPGGLALPIGAGYRGHAGRKMTLGIRPEHIALSSQAEGGVPLTVDTLEILGADNLAHGRWGDQKLVVRLAHQQRPAAGSTLWLRLPEHQRHLFDGETGQRV.

The 232-residue stretch at 4–235 folds into the ABC transporter domain; it reads LKLQAVTKSW…PASRFVASFI (232 aa). 37-44 contributes to the ATP binding site; it reads GPSGCGKS.

This sequence belongs to the ABC transporter superfamily. sn-glycerol-3-phosphate importer (TC 3.A.1.1.3) family. The complex is composed of two ATP-binding proteins (UgpC), two transmembrane proteins (UgpA and UgpE) and a solute-binding protein (UgpB).

Its subcellular location is the cell inner membrane. It catalyses the reaction sn-glycerol 3-phosphate(out) + ATP + H2O = sn-glycerol 3-phosphate(in) + ADP + phosphate + H(+). Its function is as follows. Part of the ABC transporter complex UgpBAEC involved in sn-glycerol-3-phosphate (G3P) import. Responsible for energy coupling to the transport system. The polypeptide is sn-glycerol-3-phosphate import ATP-binding protein UgpC (Salmonella typhi).